A 166-amino-acid chain; its full sequence is Olee1-like protein (166 aa).

The first 23 residues, 1–23 (MAKSIIIQAPALCFLSLLGFAYS), serve as a signal peptide directing secretion. 3 disulfide bridges follow: Cys35-Cys106, Cys38-Cys150, and Cys59-Cys94.

Belongs to the Ole e I family.

It localises to the secreted. The chain is Olee1-like protein from Betula pendula (European white birch).